A 44-amino-acid chain; its full sequence is Mu-conotoxin-like Cal 12.1.1e (44 aa).

Disulfide bonds link C3–C16, C11–C28, C18–C33, and C27–C38. W17 is modified (6'-bromotryptophan). At P23 the chain carries 4-hydroxyproline. A 6'-bromotryptophan mark is found at W36 and W37. Position 39 is a 4-hydroxyproline (P39). At W43 the chain carries 6'-bromotryptophan.

Expressed by the venom duct.

The protein resides in the secreted. Functionally, mu-conotoxins block voltage-gated sodium channels. This toxin reversibly blocks voltage-gated sodium channel in cephalopods, with no alteration in the voltage dependence of sodium conductance or on the kinetics of inactivation. The sequence is that of Mu-conotoxin-like Cal 12.1.1e from Californiconus californicus (California cone).